The primary structure comprises 231 residues: tRNA (guanine-N(1)-)-methyltransferase (231 aa).

Residues G114 and 134-139 (IGDYVL) each bind S-adenosyl-L-methionine.

This sequence belongs to the RNA methyltransferase TrmD family. In terms of assembly, homodimer.

It is found in the cytoplasm. The catalysed reaction is guanosine(37) in tRNA + S-adenosyl-L-methionine = N(1)-methylguanosine(37) in tRNA + S-adenosyl-L-homocysteine + H(+). Specifically methylates guanosine-37 in various tRNAs. The chain is tRNA (guanine-N(1)-)-methyltransferase from Clostridioides difficile (strain 630) (Peptoclostridium difficile).